A 494-amino-acid polypeptide reads, in one-letter code: MEYRVKSTALLDIKSNIIIGLYENGELSPSAQKIDEISQGYLSKLIQSGEIKGKLGQVLVLRHVPNYSAERVFVVGAGKKGEINEKQFKQLIQDTINAVKATSAKEVISYLSDIKIKDRDLYWNIRFSVETLETSIYQFEQFKSKKSEQDVALTDVIFSAEGDVAQQAVNHAKAIALGVRAAKDVANCPPNVCNPVYLAEQANALATRSDLIKTTVLGEKDMADLGMNAYLAVSQGSVNEAQLSLIEYRNHPNPDAKPIVLVGKGLTFDAGGISLKPAEGMDEMKYDMGGAASVYGVMNAIAELKLPLNVIGVLAGCENLPDGNAYRPGDILTTMKGLTVEVLNTDAEGRLVLCDTLTYVERFEPELVIDVATLTGACVVALGAHNSGLISTDDKLAKDLELAAAQSTDKAWRLPLGEEYQEQLKSNFADLANIGGRWGGAITAGAFLSNFTDKYRWAHLDIAGTAWLQGANKGATGRPVPLLVQFLINQATGK.

The Mn(2+) site is built by lysine 264 and aspartate 269. The active site involves lysine 276. Positions 287, 346, and 348 each coordinate Mn(2+). Arginine 350 is an active-site residue.

It belongs to the peptidase M17 family. The cofactor is Mn(2+).

The protein resides in the cytoplasm. It carries out the reaction Release of an N-terminal amino acid, Xaa-|-Yaa-, in which Xaa is preferably Leu, but may be other amino acids including Pro although not Arg or Lys, and Yaa may be Pro. Amino acid amides and methyl esters are also readily hydrolyzed, but rates on arylamides are exceedingly low.. The catalysed reaction is Release of an N-terminal amino acid, preferentially leucine, but not glutamic or aspartic acids.. Presumably involved in the processing and regular turnover of intracellular proteins. Catalyzes the removal of unsubstituted N-terminal amino acids from various peptides. In Pasteurella multocida (strain Pm70), this protein is Probable cytosol aminopeptidase (pepA).